We begin with the raw amino-acid sequence, 334 residues long: Protein translocase subunit SecF (334 aa).

Transmembrane regions (helical) follow at residues 18–38, 144–164, 168–190, 195–217, 258–278, and 279–299; these read VAAGLTLAFIAAGFVSFAVTG, GAAMAMLIASIFTLIYLAIRF, FGLAAVLSTTHDILITLAFIKIF, SLTVVAAILTLVGYSANDTIIIF, ATLALLLLAGEVIRPFAWVMA, and FGVVMATFSSIYVAGPLLLWI.

The protein belongs to the SecD/SecF family. SecF subfamily. As to quaternary structure, forms a complex with SecD. Part of the essential Sec protein translocation apparatus which comprises SecA, SecYEG and auxiliary proteins SecDF. Other proteins may also be involved.

It localises to the cell inner membrane. Functionally, part of the Sec protein translocase complex. Interacts with the SecYEG preprotein conducting channel. SecDF uses the proton motive force (PMF) to complete protein translocation after the ATP-dependent function of SecA. This Gemmatimonas aurantiaca (strain DSM 14586 / JCM 11422 / NBRC 100505 / T-27) protein is Protein translocase subunit SecF.